A 476-amino-acid polypeptide reads, in one-letter code: Aspartyl/glutamyl-tRNA(Asn/Gln) amidotransferase subunit B (476 aa).

The protein belongs to the GatB/GatE family. GatB subfamily. In terms of assembly, heterotrimer of A, B and C subunits.

It catalyses the reaction L-glutamyl-tRNA(Gln) + L-glutamine + ATP + H2O = L-glutaminyl-tRNA(Gln) + L-glutamate + ADP + phosphate + H(+). The catalysed reaction is L-aspartyl-tRNA(Asn) + L-glutamine + ATP + H2O = L-asparaginyl-tRNA(Asn) + L-glutamate + ADP + phosphate + 2 H(+). Allows the formation of correctly charged Asn-tRNA(Asn) or Gln-tRNA(Gln) through the transamidation of misacylated Asp-tRNA(Asn) or Glu-tRNA(Gln) in organisms which lack either or both of asparaginyl-tRNA or glutaminyl-tRNA synthetases. The reaction takes place in the presence of glutamine and ATP through an activated phospho-Asp-tRNA(Asn) or phospho-Glu-tRNA(Gln). In Lacticaseibacillus casei (strain BL23) (Lactobacillus casei), this protein is Aspartyl/glutamyl-tRNA(Asn/Gln) amidotransferase subunit B.